Here is a 236-residue protein sequence, read N- to C-terminus: Phospholipid hydroperoxide glutathione peroxidase, chloroplastic (236 aa).

The transit peptide at 1-64 (MASMAFSTTF…SNFPIVPSKT (64 aa)) directs the protein to the chloroplast. The active site involves Cys-111.

This sequence belongs to the glutathione peroxidase family.

Its subcellular location is the plastid. The protein resides in the chloroplast stroma. The enzyme catalyses a hydroperoxy polyunsaturated fatty acid + 2 glutathione = a hydroxy polyunsaturated fatty acid + glutathione disulfide + H2O. In terms of biological role, protects cells and enzymes from oxidative damage, by catalyzing the reduction of hydrogen peroxide, lipid peroxides and organic hydroperoxide, by glutathione. This is Phospholipid hydroperoxide glutathione peroxidase, chloroplastic from Pisum sativum (Garden pea).